We begin with the raw amino-acid sequence, 650 residues long: Threonine--tRNA ligase (650 aa).

In terms of domain architecture, TGS spans 1–66; sequence MVQITLPDGS…EHDAQLAIVT (66 aa). Positions 247–538 are catalytic; it reads DHRKIGRDLD…LIENHAGAMP (292 aa). Residues cysteine 338, histidine 389, and histidine 515 each contribute to the Zn(2+) site.

The protein belongs to the class-II aminoacyl-tRNA synthetase family. In terms of assembly, homodimer. The cofactor is Zn(2+).

It is found in the cytoplasm. It carries out the reaction tRNA(Thr) + L-threonine + ATP = L-threonyl-tRNA(Thr) + AMP + diphosphate + H(+). In terms of biological role, catalyzes the attachment of threonine to tRNA(Thr) in a two-step reaction: L-threonine is first activated by ATP to form Thr-AMP and then transferred to the acceptor end of tRNA(Thr). Also edits incorrectly charged L-seryl-tRNA(Thr). The chain is Threonine--tRNA ligase from Bordetella petrii (strain ATCC BAA-461 / DSM 12804 / CCUG 43448).